The sequence spans 180 residues: Large ribosomal subunit protein uL6 (180 aa).

The protein belongs to the universal ribosomal protein uL6 family. Part of the 50S ribosomal subunit.

This protein binds to the 23S rRNA, and is important in its secondary structure. It is located near the subunit interface in the base of the L7/L12 stalk, and near the tRNA binding site of the peptidyltransferase center. The polypeptide is Large ribosomal subunit protein uL6 (Bdellovibrio bacteriovorus (strain ATCC 15356 / DSM 50701 / NCIMB 9529 / HD100)).